Here is a 534-residue protein sequence, read N- to C-terminus: Solute carrier family 22 member 15 (534 aa).

The chain crosses the membrane as a helical span at residues 22–42; the sequence is FLLAVLLQLYSATEAIIITIL. N52, N58, and N83 each carry an N-linked (GlcNAc...) asparagine glycan. 11 consecutive transmembrane segments (helical) span residues 97-117, 136-156, 161-181, 191-211, 216-236, 297-317, 327-347, 356-376, 391-411, 424-444, and 450-470; these read AAYE…IGVI, LALE…PLFL, LVGV…NECI, SLGS…GYFI, LLAL…LCIP, TLIM…LTLS, LNLA…MYLI, GSLA…MLVP, TLSL…YIYS, MGVC…IPAL, and ALPF…SLLL. N513 is a glycosylation site (N-linked (GlcNAc...) asparagine).

Belongs to the major facilitator (TC 2.A.1) superfamily. Organic cation transporter (TC 2.A.1.19) family.

It localises to the membrane. Functionally, probably transports organic cations. The protein is Solute carrier family 22 member 15 (slc22a15) of Xenopus tropicalis (Western clawed frog).